The sequence spans 213 residues: Autophagy-related protein 29 (213 aa).

A Phosphoserine modification is found at S106. The interval L157–L196 is disordered. Positions K162–E184 are enriched in basic and acidic residues. Phosphoserine is present on residues S187 and S188.

This sequence belongs to the ATG29 family. Forms a stable complex with ATG17 and ATG31. Interacts directly with ATG31. The ATG17-ATG29-ATG31 complex interacts with the ATG1-ATG13 complex. Note=The interaction with the ATG1-ATG13 complex is induced by starvation.

It localises to the preautophagosomal structure. In terms of biological role, plays a role in autophagy. Functions at the preautophagosomal structure (PAS) in order to form normal autophagosomes under starvation conditions. Also plays a role in mitophagy and regulation of filamentous growth. In Saccharomyces cerevisiae (strain ATCC 204508 / S288c) (Baker's yeast), this protein is Autophagy-related protein 29 (ATG29).